The primary structure comprises 359 residues: MAPNITSAPTGVLFEGDTIGPAAKDQQAEVNAPEAKKPREPYRRQIVWRNVILFIYLHLAALYGAYLAFTSAKIATTIFAIILYQVSGVGITGGAHRLWAHRSYKAKWPLRVILMLCNTLAFQNHIYEWARDHRVHHKFSETDADPHNATRGFFFSHVGWLLVRKHPDVKEKGKGIDMHDLEQDKIVMFQKKYYLILMPIVCFLIPTTIPVYMWNETWSNAWFVATLFRYTFTLNMTWLVNSAAHMWGSQPYDKYINPAENLGVALGAMGEGWHNYHHVFPWDYKAAELGNYRANFTTAFIDFFARIGWAYDLKTVPVSMIQRRVERTGDGSHEVWGWGDKDMPQEDIDGAVIEKRKTQ.

A run of 2 helical transmembrane segments spans residues 51–71 (VILF…AFTS) and 74–94 (IATT…ITGG). Positions 96, 101, 133, 136, and 137 each coordinate Fe cation. A Histidine box-1 motif is present at residues 96-101 (HRLWAH). Residues 133–137 (HRVHH) carry the Histidine box-2 motif. 2 consecutive transmembrane segments (helical) span residues 194–214 (YLIL…VYMW) and 222–244 (WFVA…NSAA). His245, His274, His277, and His278 together coordinate Fe cation. Residues 274–278 (HNYHH) carry the Histidine box-3 motif.

This sequence belongs to the fatty acid desaturase type 1 family. Fe(2+) serves as cofactor.

It is found in the membrane. The catalysed reaction is octadecanoyl-CoA + 2 Fe(II)-[cytochrome b5] + O2 + 2 H(+) = (9Z)-octadecenoyl-CoA + 2 Fe(III)-[cytochrome b5] + 2 H2O. The enzyme catalyses hexadecanoyl-CoA + 2 Fe(II)-[cytochrome b5] + O2 + 2 H(+) = (9Z)-hexadecenoyl-CoA + 2 Fe(III)-[cytochrome b5] + 2 H2O. Its function is as follows. Catalyzes the formation of a Delta9 double bond, acting on saturated fatty acyl substrates like palmitoyl-CoA (hexadecanoyl-CoA) and stearoyl-CoA (octadecanoyl-CoA) with higher desaturation activity on octadecanoyl-CoA than hexadecanoyl-CoA. This is Acyl-CoA Delta-9 desaturase from Acheta domesticus (House cricket).